The sequence spans 86 residues: MASFRTLFACVVILCCVLWSSMARYGEDMEVETEMNKRDEGVRCTGQHASSFCLNGGTCRHIASLGEYYCICPGDYTGHRCDQKSG.

The N-terminal stretch at 1–23 (MASFRTLFACVVILCCVLWSSMA) is a signal peptide. A propeptide spanning residues 24–36 (RYGEDMEVETEMN) is cleaved from the precursor. Residues 40-82 (EGVRCTGQHASSFCLNGGTCRHIASLGEYYCICPGDYTGHRCD) enclose the EGF-like domain. Cystine bridges form between C44–C59, C53–C70, and C72–C81.

This sequence belongs to the EGF domain peptide family.

The protein resides in the secreted. The protein localises to the nematocyst. Its function is as follows. Has both toxic and EGF activity. Its EGF activity consists of rounding cells (morphological change) and inducing tyrosine phosphorylation of the EGFR in A431 cells, but with a lower potency that human EGF. The chain is OMEGA-stichotoxin-Shd4a from Stichodactyla haddoni (Saddle carpet anemone).